A 199-amino-acid polypeptide reads, in one-letter code: Superoxide dismutase [Fe] (199 aa).

His-28, His-80, Asp-162, and His-166 together coordinate Fe cation.

The protein belongs to the iron/manganese superoxide dismutase family. Homodimer. Requires Fe cation as cofactor.

It is found in the cytoplasm. The enzyme catalyses 2 superoxide + 2 H(+) = H2O2 + O2. Functionally, destroys superoxide anion radicals which are normally produced within the cells and which are toxic to biological systems. This chain is Superoxide dismutase [Fe] (sodB), found in Leptolyngbya boryana (Plectonema boryanum).